Here is a 51-residue protein sequence, read N- to C-terminus: Mitochondrial import receptor subunit TOM5 homolog (51 aa).

Met1 bears the N-acetylmethionine mark. A Glycyl lysine isopeptide (Lys-Gly) (interchain with G-Cter in SUMO2) cross-link involves residue Lys10. The chain crosses the membrane as a helical span at residues 27–45 (SIRNFLIYVALLRVTPYIL).

The protein belongs to the Tom5 family. In terms of assembly, forms part of the preprotein translocase complex of the outer mitochondrial membrane (TOM complex) which consists of at least 7 different proteins (TOMM5, TOMM6, TOMM7, TOMM20, TOMM22, TOMM40 and TOMM70).

Its subcellular location is the mitochondrion outer membrane. The sequence is that of Mitochondrial import receptor subunit TOM5 homolog from Mus musculus (Mouse).